The primary structure comprises 278 residues: tRNA (guanine-N(7)-)-methyltransferase (278 aa).

Residues Gly-95, 118-119 (EI), 153-154 (NA), and Cys-173 contribute to the S-adenosyl-L-methionine site. Asp-176 is an active-site residue. S-adenosyl-L-methionine is bound at residue 251–253 (TEE).

This sequence belongs to the class I-like SAM-binding methyltransferase superfamily. TrmB family. Forms a complex with TRM82.

It is found in the nucleus. It catalyses the reaction guanosine(46) in tRNA + S-adenosyl-L-methionine = N(7)-methylguanosine(46) in tRNA + S-adenosyl-L-homocysteine. It participates in tRNA modification; N(7)-methylguanine-tRNA biosynthesis. Its function is as follows. Catalyzes the formation of N(7)-methylguanine at position 46 (m7G46) in tRNA. The protein is tRNA (guanine-N(7)-)-methyltransferase of Kluyveromyces lactis (strain ATCC 8585 / CBS 2359 / DSM 70799 / NBRC 1267 / NRRL Y-1140 / WM37) (Yeast).